The sequence spans 157 residues: Catabolic 3-dehydroquinase (157 aa).

The active-site Proton acceptor is the tyrosine 27. Substrate-binding residues include asparagine 80, histidine 86, and aspartate 93. The Proton donor role is filled by histidine 106. Substrate contacts are provided by residues 107–108 (VS) and arginine 117.

The protein belongs to the type-II 3-dehydroquinase family. In terms of assembly, homododecamer. Adopts a ring-like structure, composed of an arrangement of two hexameric rings stacked on top of one another.

The catalysed reaction is 3-dehydroquinate = 3-dehydroshikimate + H2O. Its pathway is aromatic compound metabolism; 3,4-dihydroxybenzoate biosynthesis; 3,4-dihydroxybenzoate from 3-dehydroquinate: step 1/2. Its function is as follows. Is involved in the catabolism of quinate. Allows the utilization of quinate as carbon source via the beta-ketoadipate pathway. The protein is Catabolic 3-dehydroquinase of Pyricularia oryzae (strain 70-15 / ATCC MYA-4617 / FGSC 8958) (Rice blast fungus).